A 258-amino-acid chain; its full sequence is Acyl-[acyl-carrier-protein]--UDP-N-acetylglucosamine O-acyltransferase (258 aa).

The protein belongs to the transferase hexapeptide repeat family. LpxA subfamily. In terms of assembly, homotrimer.

The protein localises to the cytoplasm. The catalysed reaction is a (3R)-hydroxyacyl-[ACP] + UDP-N-acetyl-alpha-D-glucosamine = a UDP-3-O-[(3R)-3-hydroxyacyl]-N-acetyl-alpha-D-glucosamine + holo-[ACP]. It functions in the pathway glycolipid biosynthesis; lipid IV(A) biosynthesis; lipid IV(A) from (3R)-3-hydroxytetradecanoyl-[acyl-carrier-protein] and UDP-N-acetyl-alpha-D-glucosamine: step 1/6. Involved in the biosynthesis of lipid A, a phosphorylated glycolipid that anchors the lipopolysaccharide to the outer membrane of the cell. In Pseudomonas putida (strain W619), this protein is Acyl-[acyl-carrier-protein]--UDP-N-acetylglucosamine O-acyltransferase.